The primary structure comprises 531 residues: MVSRFEHPAGGYKKIFETAEELNEPLPATVTGRIPSFIKGSLLRLGPGLFEAGAEPFYHLFDGQALMHKFDFSNGQVTYFRKFVKTDAYVRAITEKRVVITEFGTCAYPDPCKNIFSRFFSYFKGVEVTDNCLVNVYPIGEDFYAVTETNYITKVNVDTLETLKKVDMCNYVNINGVTAHPHIERDGTVYNIGNCMGKGASLAYNIVRIPPTQKDKSDPIEKSKVVVQFPSAERFKPSYVHSFGMTENYFVFVETPVKINLLKFLSAWSIRGSNYMDCFESDEEKGTWIHIARKHPGEYIDYKFRTSAMGLFHHINCYEDSGFIVFDLCAWKGFEFVYNYLWLANLRANWEEVKRNAMIAPQPEVRRYVIPLDPFREEQGKNLISLPYTTATATMRADGTIWLEPEVLFSGPRQAFEFPQINYRMVNGKNYTYAYGLGLNHFVPDRICKLNVRTKETWVWQEPDSYPSEPLFVQTPDGVDEDDGILMTIVVSPGAQRPTYCLILNAKDLSEIARAEVEILTPVTFHGMYKP.

A lipid anchor (S-palmitoyl cysteine; in membrane form) is attached at C112. Residues H180, H241, and H313 each coordinate Fe cation. A lipid anchor (S-palmitoyl cysteine; in membrane form) is attached at C329. Residue H526 participates in Fe cation binding.

This sequence belongs to the carotenoid oxygenase family. It depends on Fe(2+) as a cofactor. Post-translationally, palmitoylated. As to expression, retinal pigment epithelium-specific.

The protein localises to the cytoplasm. Its subcellular location is the cell membrane. The enzyme catalyses an all-trans-retinyl ester + H2O = 11-cis-retinol + a fatty acid + H(+). It carries out the reaction lutein = (3R,3'S)-zeaxanthin. The catalysed reaction is all-trans-retinyl hexadecanoate + H2O = 11-cis-retinol + hexadecanoate + H(+). Functionally, plays important roles in the production of 11-cis retinal and in visual pigment regeneration. Capable of catalyzing the isomerization of lutein to meso-zeaxanthin an eye-specific carotenoid. The chain is Retinoid isomerohydrolase (rpe65a) from Danio rerio (Zebrafish).